A 311-amino-acid chain; its full sequence is 4-diphosphocytidyl-2-C-methyl-D-erythritol kinase (311 aa).

Residue lysine 16 is part of the active site. Residue proline 100–serine 110 participates in ATP binding. Aspartate 142 is an active-site residue.

It belongs to the GHMP kinase family. IspE subfamily.

It catalyses the reaction 4-CDP-2-C-methyl-D-erythritol + ATP = 4-CDP-2-C-methyl-D-erythritol 2-phosphate + ADP + H(+). It functions in the pathway isoprenoid biosynthesis; isopentenyl diphosphate biosynthesis via DXP pathway; isopentenyl diphosphate from 1-deoxy-D-xylulose 5-phosphate: step 3/6. Functionally, catalyzes the phosphorylation of the position 2 hydroxy group of 4-diphosphocytidyl-2C-methyl-D-erythritol. In Prochlorococcus marinus (strain MIT 9312), this protein is 4-diphosphocytidyl-2-C-methyl-D-erythritol kinase.